The following is a 276-amino-acid chain: Undecaprenyl-diphosphatase 1 (276 aa).

7 helical membrane-spanning segments follow: residues 4-24 (ILIC…FLPV), 46-63 (TFDV…CWEY), 83-103 (FTLN…LFEK), 108-128 (VLFS…IILW), 187-207 (VATE…TLYE), 217-237 (VDSL…AFVC), and 252-272 (VFAW…YSGW).

It belongs to the UppP family.

Its subcellular location is the cell inner membrane. The catalysed reaction is di-trans,octa-cis-undecaprenyl diphosphate + H2O = di-trans,octa-cis-undecaprenyl phosphate + phosphate + H(+). Functionally, catalyzes the dephosphorylation of undecaprenyl diphosphate (UPP). Confers resistance to bacitracin. This is Undecaprenyl-diphosphatase 1 from Burkholderia lata (strain ATCC 17760 / DSM 23089 / LMG 22485 / NCIMB 9086 / R18194 / 383).